A 177-amino-acid polypeptide reads, in one-letter code: ATP synthase subunit delta (177 aa).

The protein belongs to the ATPase delta chain family. F-type ATPases have 2 components, F(1) - the catalytic core - and F(0) - the membrane proton channel. F(1) has five subunits: alpha(3), beta(3), gamma(1), delta(1), epsilon(1). CF(0) has four main subunits: a(1), b(1), b'(1) and c(10-14). The alpha and beta chains form an alternating ring which encloses part of the gamma chain. F(1) is attached to F(0) by a central stalk formed by the gamma and epsilon chains, while a peripheral stalk is formed by the delta, b and b' chains.

The protein resides in the cell inner membrane. Functionally, f(1)F(0) ATP synthase produces ATP from ADP in the presence of a proton or sodium gradient. F-type ATPases consist of two structural domains, F(1) containing the extramembraneous catalytic core and F(0) containing the membrane proton channel, linked together by a central stalk and a peripheral stalk. During catalysis, ATP synthesis in the catalytic domain of F(1) is coupled via a rotary mechanism of the central stalk subunits to proton translocation. This protein is part of the stalk that links CF(0) to CF(1). It either transmits conformational changes from CF(0) to CF(1) or is implicated in proton conduction. The protein is ATP synthase subunit delta of Methylibium petroleiphilum (strain ATCC BAA-1232 / LMG 22953 / PM1).